A 387-amino-acid polypeptide reads, in one-letter code: Probable multidrug resistance protein EmrK (387 aa).

The Cytoplasmic segment spans residues 1 to 16 (MEQINSNKKHSNRRKY). A helical transmembrane segment spans residues 17–37 (FSLLAVVLFIAFSGAYAYWSM). Residues 38 to 387 (ELEDMISTDD…SNIISHNGQL (350 aa)) lie on the Periplasmic side of the membrane.

The protein belongs to the membrane fusion protein (MFP) (TC 8.A.1) family. As to quaternary structure, part of the tripartite efflux system EmrYK-TolC, which is composed of an inner membrane transporter, EmrY, a membrane fusion protein, EmrK, and an outer membrane component, TolC. The complex forms a large protein conduit and can translocate molecules across both the inner and outer membranes.

It is found in the cell inner membrane. In terms of biological role, part of the tripartite efflux system EmrYK-TolC, which confers resistance to various drugs. The protein is Probable multidrug resistance protein EmrK (emrK) of Escherichia coli (strain K12).